Here is a 267-residue protein sequence, read N- to C-terminus: Dihydropteroate synthase (267 aa).

Residues 1–251 (MTKTKIMGIL…NVELNAKLAK (251 aa)) form the Pterin-binding domain. Asn11 is a Mg(2+) binding site. (7,8-dihydropterin-6-yl)methyl diphosphate contacts are provided by residues Thr51, Asp84, Asn103, Asp167, Lys203, and 239–241 (RVH).

This sequence belongs to the DHPS family. As to quaternary structure, homodimer. It depends on Mg(2+) as a cofactor.

The catalysed reaction is (7,8-dihydropterin-6-yl)methyl diphosphate + 4-aminobenzoate = 7,8-dihydropteroate + diphosphate. It functions in the pathway cofactor biosynthesis; tetrahydrofolate biosynthesis; 7,8-dihydrofolate from 2-amino-4-hydroxy-6-hydroxymethyl-7,8-dihydropteridine diphosphate and 4-aminobenzoate: step 1/2. Its function is as follows. Catalyzes the condensation of para-aminobenzoate (pABA) with 6-hydroxymethyl-7,8-dihydropterin diphosphate (DHPt-PP) to form 7,8-dihydropteroate (H2Pte), the immediate precursor of folate derivatives. The protein is Dihydropteroate synthase (folP) of Staphylococcus aureus (strain MSSA476).